Reading from the N-terminus, the 582-residue chain is ATP-dependent lipid A-core flippase (582 aa).

5 helical membrane-spanning segments follow: residues 16–36 (LWPMISPFKAGLAVAAIALII), 63–83 (VLLWMPLVVIGLMLVRGASGF), 153–173 (IIGLFILMFYYSWQLSIILIV), 253–273 (PIIQLIASLALAFVLYAASFP), and 275–295 (VMETLTAGTITVVFSSMIALM). The ABC transmembrane type-1 domain occupies 28-310 (AVAAIALIIN…LTNVNAQFQR (283 aa)). In terms of domain architecture, ABC transporter spans 342 to 578 (LEFRQVNFAY…NGAYAQLHRM (237 aa)). An ATP-binding site is contributed by 376-383 (GRSGSGKS).

It belongs to the ABC transporter superfamily. Lipid exporter (TC 3.A.1.106) family. In terms of assembly, homodimer.

It localises to the cell inner membrane. It carries out the reaction ATP + H2O + lipid A-core oligosaccharideSide 1 = ADP + phosphate + lipid A-core oligosaccharideSide 2.. In terms of biological role, involved in lipopolysaccharide (LPS) biosynthesis. Translocates lipid A-core from the inner to the outer leaflet of the inner membrane. Transmembrane domains (TMD) form a pore in the inner membrane and the ATP-binding domain (NBD) is responsible for energy generation. The chain is ATP-dependent lipid A-core flippase from Pectobacterium atrosepticum (strain SCRI 1043 / ATCC BAA-672) (Erwinia carotovora subsp. atroseptica).